Here is a 363-residue protein sequence, read N- to C-terminus: 4-hydroxy-2-oxovalerate aldolase 1 (363 aa).

Residues 13–265 enclose the Pyruvate carboxyltransferase domain; sequence VRMTDTSLRD…KTGIDFFDIA (253 aa). 21–22 is a substrate binding site; it reads RD. Residue D22 participates in Mn(2+) binding. Catalysis depends on H25, which acts as the Proton acceptor. Residues S175 and H204 each contribute to the substrate site. The Mn(2+) site is built by H204 and H206. Y295 serves as a coordination point for substrate.

This sequence belongs to the 4-hydroxy-2-oxovalerate aldolase family.

It catalyses the reaction (S)-4-hydroxy-2-oxopentanoate = acetaldehyde + pyruvate. The sequence is that of 4-hydroxy-2-oxovalerate aldolase 1 from Mycobacterium sp. (strain JLS).